Reading from the N-terminus, the 680-residue chain is MAAKINSLAALVSLQASHHHHXSTPFYFSPFSPHLSTTLTSRRRSLRSAVVAQSTAGTQSKAPSDVDLAAVSGQDRLLKVPISNIRNFCIIAHIDHGKSTLADKLLQMTGTVQKREMKEQFLDNMDLERERGITIKLQAARMRYVFENEPYCLNLIDTPGHVDFSYEVSRSLAACEGALLVVDASQGVEAQTLANVYLALENNLEIIPVLNKIDLPGAEPVRVSQEIEEVVGLDCSDAIHCSAKEGIGITEILNAIVKRIPPPCDTAERPLRALIFDSYYDPYRGVIVYFRVIDGTIKKGDRIYFMASKKDYFADEIGVLSPNQLQADELYAGEVGYLAASIRSVADARVGDTITHYGRKAENSLPGYEEATPMVFCGLFPVDADKFPDLRDALEKLQLNDAALKFEPETSSAMGFGFRCGFLGLLHMEIIQERLEREYNLTLITTAPSVVYRVNCINGDTVECSNPSLLPEPGKRTSIEEPYVKIEMLTPKDYIGPLMELAQDRRGEFKEMKFITENRASITYELPLAEMVGDFFDQLKSRSKGYASMEYSFLGYKESELIKLDIQINGERVEPLATIVHKDKAYAVGRALTQKLKELIPRQMFKVPIQACIGAKVIASESLSAIRKDVLSKCYGGDITRKKKLLKKQAEGKKRMKAIGKVDVPQEAFMAVLKLEKEVL.

The N-terminal 51 residues, 1-51 (MAAKINSLAALVSLQASHHHHXSTPFYFSPFSPHLSTTLTSRRRSLRSAVV), are a transit peptide targeting the chloroplast. The tr-type G domain maps to 83 to 264 (SNIRNFCIIA…AIVKRIPPPC (182 aa)). Residues 92-99 (AHIDHGKS), 157-161 (DTPGH), and 211-214 (NKID) contribute to the GTP site.

It belongs to the TRAFAC class translation factor GTPase superfamily. Classic translation factor GTPase family. LepA subfamily.

The protein localises to the plastid. It is found in the chloroplast. The catalysed reaction is GTP + H2O = GDP + phosphate + H(+). Its function is as follows. Promotes chloroplast protein synthesis. May act as a fidelity factor of the translation reaction, by catalyzing a one-codon backward translocation of tRNAs on improperly translocated ribosomes. This chain is Translation factor GUF1 homolog, chloroplastic, found in Vitis vinifera (Grape).